A 361-amino-acid polypeptide reads, in one-letter code: Membrane-bound lytic murein transglycosylase B (361 aa).

The first 18 residues, 1–18 (MFKRRYVTLLPLFVLLAA), serve as a signal peptide directing secretion. A lipid anchor (N-palmitoyl cysteine) is attached at C19. Residue C19 is the site of S-diacylglycerol cysteine attachment. The active site involves E162.

Monomer.

Its subcellular location is the cell outer membrane. The catalysed reaction is Exolytic cleavage of the (1-&gt;4)-beta-glycosidic linkage between N-acetylmuramic acid (MurNAc) and N-acetylglucosamine (GlcNAc) residues in peptidoglycan, from either the reducing or the non-reducing ends of the peptidoglycan chains, with concomitant formation of a 1,6-anhydrobond in the MurNAc residue.. In terms of biological role, murein-degrading enzyme. Catalyzes the cleavage of the glycosidic bonds between N-acetylmuramic acid and N-acetylglucosamine residues in peptidoglycan. May play a role in recycling of muropeptides during cell elongation and/or cell division. This Escherichia coli (strain K12) protein is Membrane-bound lytic murein transglycosylase B (mltB).